Consider the following 372-residue polypeptide: 4-hydroxy-3-methylbut-2-en-1-yl diphosphate synthase (flavodoxin) (372 aa).

The [4Fe-4S] cluster site is built by cysteine 270, cysteine 273, cysteine 305, and glutamate 312.

It belongs to the IspG family. The cofactor is [4Fe-4S] cluster.

The enzyme catalyses (2E)-4-hydroxy-3-methylbut-2-enyl diphosphate + oxidized [flavodoxin] + H2O + 2 H(+) = 2-C-methyl-D-erythritol 2,4-cyclic diphosphate + reduced [flavodoxin]. Its pathway is isoprenoid biosynthesis; isopentenyl diphosphate biosynthesis via DXP pathway; isopentenyl diphosphate from 1-deoxy-D-xylulose 5-phosphate: step 5/6. Converts 2C-methyl-D-erythritol 2,4-cyclodiphosphate (ME-2,4cPP) into 1-hydroxy-2-methyl-2-(E)-butenyl 4-diphosphate. The sequence is that of 4-hydroxy-3-methylbut-2-en-1-yl diphosphate synthase (flavodoxin) from Alcanivorax borkumensis (strain ATCC 700651 / DSM 11573 / NCIMB 13689 / SK2).